Here is a 559-residue protein sequence, read N- to C-terminus: MRFLSLAPDRPRRGGPRHLPSGSPAPPPPPPLLLLLLLGGCLGVSGAAKGSRRPNVVLVLADDQDEVLGGMTPLKKTKALIGEMGMTFSSAYVPSALCCPSRASILTGKYPHNHHVVNNTLEGNCSSKSWQKIQEPNTFPAILRSMCGYQTFFAGKYLNEYGAPDAGGLGHVPLGWSYWYALEKNSKYYNYTLSINGKARKHGENYSVDYLTDVLANVSLDFLDYKSNSEPFFMMISTPAPHSPWTAAPQYQNAFQNVFAPRNKNFNIHGTNKHWLIRQAKTPMTNSSIQFLDNAFRERWQTLLSVDDLVEKLVKRLEFNGELNNTYIFYTSDNGYHTGQFSLPIDKRQLYEFDIKVPLLVRGPGIKPNQTSKMLVANIDLGPTILDIAGYGLNKTQMDGMSFLPILRGASNLTWRSDVLVEYQGEGRNVTDPTCPSLSPGVSQCFPDCVCEDAYNNTYACVRTMSELWNLQYCEFDDQEVFVEVYNLTADPHQLNNIAKSIDPELLGKMNYRLMMLQSCSGPTCRTPRVFDPGYRFDPRLMFSNHGSVRTRRFSKHLL.

Positions 1-26 are disordered; sequence MRFLSLAPDRPRRGGPRHLPSGSPAP. Residues 1–47 form the signal peptide; it reads MRFLSLAPDRPRRGGPRHLPSGSPAPPPPPPLLLLLLLGGCLGVSGA. 3 residues coordinate Ca(2+): D62, D63, and C98. Catalysis depends on C98, which acts as the Nucleophile. A 3-oxoalanine (Cys) modification is found at C98. N-linked (GlcNAc...) asparagine glycosylation is found at N118, N124, N190, N205, N217, N286, and N324. Residues D333 and N334 each coordinate Ca(2+). 6 N-linked (GlcNAc...) asparagine glycosylation sites follow: N369, N394, N412, N429, N456, and N487. S548 bears the Phosphoserine mark.

The protein belongs to the sulfatase family. Ca(2+) is required as a cofactor. Post-translationally, processed by internal peptidase. In terms of processing, the conversion to 3-oxoalanine (also known as C-formylglycine, FGly), of a serine or cysteine residue in prokaryotes and of a cysteine residue in eukaryotes, is critical for catalytic activity.

The protein resides in the lysosome. The enzyme catalyses Hydrolysis of the 6-sulfate groups of the N-acetyl-D-glucosamine 6-sulfate units of heparan sulfate and keratan sulfate.. In terms of biological role, hydrolyzes 6-sulfate groups in N-acetyl-d-glucosaminide units of heparin sulfate and keratan sulfate. The chain is N-acetylglucosamine-6-sulfatase (GNS) from Capra hircus (Goat).